Here is a 773-residue protein sequence, read N- to C-terminus: Lon protease homolog 2, peroxisomal (773 aa).

Residues 9–198 form the Lon N-terminal domain; sequence LPVILVTSGV…MCIKWMNEKK (190 aa). 336-343 serves as a coordination point for ATP; the sequence is GPPGIGKT. The Lon proteolytic domain occupies 587-766; the sequence is PLPAGVCFGL…EDVIGAMMDK (180 aa). Active-site residues include Ser-672 and Lys-715. The Microbody targeting signal motif lies at 771–773; that stretch reads AKL.

This sequence belongs to the peptidase S16 family.

The protein resides in the peroxisome matrix. It catalyses the reaction Hydrolysis of proteins in presence of ATP.. ATP-dependent serine protease that mediates the selective degradation of misfolded and unassembled polypeptides in the peroxisomal matrix. Necessary for type 2 peroxisome targeting signal (PTS2)-containing protein processing and facilitates peroxisome matrix protein import. The protein is Lon protease homolog 2, peroxisomal of Caenorhabditis elegans.